Here is a 404-residue protein sequence, read N- to C-terminus: L-cysteine:1D-myo-inositol 2-amino-2-deoxy-alpha-D-glucopyranoside ligase (404 aa).

The interval M1–P20 is disordered. Residue C45 participates in Zn(2+) binding. L-cysteinyl-5'-AMP is bound by residues C45–T48, T60, and N83–T85. The 'HIGH' region signature appears at I47 to H57. The 'ERGGDP' region signature appears at E185–P190. The disordered stretch occupies residues E185–G216. A compositionally biased stretch (basic and acidic residues) spans R186–L199. Residue W226 coordinates L-cysteinyl-5'-AMP. C230 contributes to the Zn(2+) binding site. G248 to D250 contributes to the L-cysteinyl-5'-AMP binding site. H255 is a binding site for Zn(2+). An L-cysteinyl-5'-AMP-binding site is contributed by L280. The short motif at K286–S290 is the 'KMSKS' region element.

This sequence belongs to the class-I aminoacyl-tRNA synthetase family. MshC subfamily. Monomer. Zn(2+) serves as cofactor.

The catalysed reaction is 1D-myo-inositol 2-amino-2-deoxy-alpha-D-glucopyranoside + L-cysteine + ATP = 1D-myo-inositol 2-(L-cysteinylamino)-2-deoxy-alpha-D-glucopyranoside + AMP + diphosphate + H(+). Functionally, catalyzes the ATP-dependent condensation of GlcN-Ins and L-cysteine to form L-Cys-GlcN-Ins. The chain is L-cysteine:1D-myo-inositol 2-amino-2-deoxy-alpha-D-glucopyranoside ligase from Xylanimonas cellulosilytica (strain DSM 15894 / JCM 12276 / CECT 5975 / KCTC 9989 / LMG 20990 / NBRC 107835 / XIL07).